Here is a 100-residue protein sequence, read N- to C-terminus: Small ribosomal subunit protein uS14c (100 aa).

Belongs to the universal ribosomal protein uS14 family. As to quaternary structure, part of the 30S ribosomal subunit.

The protein localises to the plastid. It is found in the chloroplast. Its function is as follows. Binds 16S rRNA, required for the assembly of 30S particles. The protein is Small ribosomal subunit protein uS14c of Nephroselmis olivacea (Green alga).